Reading from the N-terminus, the 130-residue chain is Small ribosomal subunit protein uS9 (130 aa).

It belongs to the universal ribosomal protein uS9 family.

The sequence is that of Small ribosomal subunit protein uS9 from Nitrosospira multiformis (strain ATCC 25196 / NCIMB 11849 / C 71).